The sequence spans 341 residues: Vacuolar morphogenesis protein 7 homolog (341 aa).

The region spanning 1-115 is the PX domain; the sequence is MALKIKIPET…KFLNIKDESE (115 aa). Residues 214–233 show a composition bias toward low complexity; the sequence is NSPVAPPSASSQLNSSNPSS. The tract at residues 214 to 265 is disordered; it reads NSPVAPPSASSQLNSSNPSSPFRPLSASTDKQSNTSLNRVLGKNRMPETQTT. Residues 239-251 show a composition bias toward polar residues; that stretch reads SASTDKQSNTSLN. The t-SNARE coiled-coil homology domain maps to 278–340; sequence NQTMEDQDMQ…HRTRAGLRKL (63 aa).

As to quaternary structure, possibly multimeric.

It is found in the vacuole. Functionally, essential for proper morphogenesis of the vacuole. May exist as structural reinforcement on the surface of the vacuolar membrane and be required for maintenance against rupture by osmotic pressure. This is Vacuolar morphogenesis protein 7 homolog from Schizosaccharomyces pombe (strain 972 / ATCC 24843) (Fission yeast).